Here is a 218-residue protein sequence, read N- to C-terminus: MGQKVNPIGLRIGIIRDWESRWYAEKDYADLVHEDLKIREYINKRLQDAAVSRVEIERAANRVNVTIHTAKPGMVIGKGGSEVEALRKALTQLTGKREHINIVEIKKPDLDAKLVAENIARQLENRVSFRRAQKQAIQRAMRPGRKGVKTMVVRRLGGAEIARSEHYSEGTVPLHTLRADIDYATAEADTTYGKIGVKVWIYRGEVLPTKKKAEEGGK.

In terms of domain architecture, KH type-2 spans 38 to 106; the sequence is IREYINKRLQ…REHINIVEIK (69 aa).

Belongs to the universal ribosomal protein uS3 family. As to quaternary structure, part of the 30S ribosomal subunit. Forms a tight complex with proteins S10 and S14.

Binds the lower part of the 30S subunit head. Binds mRNA in the 70S ribosome, positioning it for translation. This chain is Small ribosomal subunit protein uS3, found in Geobacillus stearothermophilus (Bacillus stearothermophilus).